The following is a 137-amino-acid chain: Fatty acid-binding protein homolog 8 (137 aa).

Residues 24–34 carry the Nuclear localization signal motif; that stretch reads KEIGVGLLIRK.

It belongs to the calycin superfamily. Fatty-acid binding protein (FABP) family. As to quaternary structure, monomer. In terms of tissue distribution, intestine.

The protein localises to the lysosome. Its subcellular location is the nucleus. Lysosomal lipid chaperone which binds to a wide range of unsaturated fatty acids, including high affinity binding to oleic acid and oleoylethanolamide, to transport them into the nucleus. As part of a lysosome-to-nucleus retrograde lipid signaling pathway, translocates into the nucleus where it activates the transcription of genes promoting longevity and activation of mitochondrial beta oxidation. In Caenorhabditis elegans, this protein is Fatty acid-binding protein homolog 8.